A 67-amino-acid polypeptide reads, in one-letter code: Large ribosomal subunit protein uL29 (67 aa).

This sequence belongs to the universal ribosomal protein uL29 family.

The chain is Large ribosomal subunit protein uL29 from Ruminiclostridium cellulolyticum (strain ATCC 35319 / DSM 5812 / JCM 6584 / H10) (Clostridium cellulolyticum).